The primary structure comprises 607 residues: Kelch repeat and BTB domain-containing protein 3 (607 aa).

A BTB domain is found at 48 to 115; it reads YDFKIIMKEE…AYTGKTRITD (68 aa). The BACK domain occupies 150–250; sequence CLHLLSLSDS…QLSEDTLQDY (101 aa). Kelch repeat units follow at residues 291-337, 339-390, 400-450, 452-502, and 548-595; these read KYIF…SSYG, KIFL…TPRT, RLFV…ACQN, IYVL…KAVP, and KIYI…VIQF.

In Mus musculus (Mouse), this protein is Kelch repeat and BTB domain-containing protein 3.